We begin with the raw amino-acid sequence, 387 residues long: Ferrochelatase (387 aa).

Fe cation is bound by residues H196 and E277.

Belongs to the ferrochelatase family.

It localises to the cytoplasm. The enzyme catalyses heme b + 2 H(+) = protoporphyrin IX + Fe(2+). It participates in porphyrin-containing compound metabolism; protoheme biosynthesis; protoheme from protoporphyrin-IX: step 1/1. Catalyzes the ferrous insertion into protoporphyrin IX. This is Ferrochelatase from Trichodesmium erythraeum (strain IMS101).